The chain runs to 1634 residues: Protein TIC 214 (1634 aa).

The next 5 helical transmembrane spans lie at 25 to 45 (FIIG…YVAL), 53 to 73 (ILAL…SFFA), 94 to 116 (HFIL…LITI), 133 to 153 (FAWF…LVWI), and 172 to 192 (IFVI…SIQC). Disordered regions lie at residues 216-242 (RERL…SESE) and 1365-1395 (QQKS…STKS). A compositionally biased stretch (basic and acidic residues) spans 1386–1395 (KYLEEDSTKS).

This sequence belongs to the TIC214 family. As to quaternary structure, part of the Tic complex.

It localises to the plastid. The protein localises to the chloroplast inner membrane. Its function is as follows. Involved in protein precursor import into chloroplasts. May be part of an intermediate translocation complex acting as a protein-conducting channel at the inner envelope. This Cuscuta exaltata (Tall dodder) protein is Protein TIC 214.